The chain runs to 330 residues: SUMO-activating enzyme subunit 1 (330 aa).

It belongs to the ubiquitin-activating E1 family. Heterodimer of sae1 and sae2. The complex binds sumo via sae2.

It is found in the nucleus. The protein operates within protein modification; protein sumoylation. The dimeric enzyme acts as an E1 ligase for sumo. It mediates ATP-dependent activation of sumo and formation of a thioester with a conserved cysteine residue on sae2. The sequence is that of SUMO-activating enzyme subunit 1 (sae1) from Dictyostelium discoideum (Social amoeba).